A 598-amino-acid chain; its full sequence is N-acetylmuramoyl-L-alanine amidase (598 aa).

The first 31 residues, 1–31 (MSPGNWKTTMVVRGILLILYGLLLQPEPGTA), serve as a signal peptide directing secretion. 2 disordered regions span residues 172–194 (SSAH…SPNV) and 212–233 (STGV…KAKS). Ser-261 carries the post-translational modification Phosphoserine. A glycan (N-linked (GlcNAc...) asparagine) is linked at Asn-353. One can recognise an N-acetylmuramoyl-L-alanine amidase domain in the interval 428–554 (FLYIHHTYVP…RQLVRTDCPG (127 aa)). Residue His-432 participates in Zn(2+) binding. Residues Cys-441 and Cys-447 are joined by a disulfide bond. Asn-507 is a glycosylation site (N-linked (GlcNAc...) asparagine). Zn(2+) contacts are provided by His-544 and Cys-552.

Belongs to the N-acetylmuramoyl-L-alanine amidase 2 family. Zn(2+) is required as a cofactor.

It is found in the secreted. The protein resides in the membrane. The enzyme catalyses Hydrolyzes the link between N-acetylmuramoyl residues and L-amino acid residues in certain cell-wall glycopeptides.. Its function is as follows. May play a scavenger role by digesting biologically active peptidoglycan (PGN) into biologically inactive fragments. Has no direct bacteriolytic activity. This is N-acetylmuramoyl-L-alanine amidase (PGLYRP2) from Sus scrofa (Pig).